The sequence spans 296 residues: Acetyl-coenzyme A carboxylase carboxyl transferase subunit beta (296 aa).

Residues 25–294 (LWIKDPSTGE…NSDAPAPPEA (270 aa)) enclose the CoA carboxyltransferase N-terminal domain.

The protein belongs to the AccD/PCCB family. In terms of assembly, acetyl-CoA carboxylase is a heterohexamer composed of biotin carboxyl carrier protein (AccB), biotin carboxylase (AccC) and two subunits each of ACCase subunit alpha (AccA) and ACCase subunit beta (AccD).

The protein localises to the cytoplasm. It catalyses the reaction N(6)-carboxybiotinyl-L-lysyl-[protein] + acetyl-CoA = N(6)-biotinyl-L-lysyl-[protein] + malonyl-CoA. It participates in lipid metabolism; malonyl-CoA biosynthesis; malonyl-CoA from acetyl-CoA: step 1/1. Its function is as follows. Component of the acetyl coenzyme A carboxylase (ACC) complex. Biotin carboxylase (BC) catalyzes the carboxylation of biotin on its carrier protein (BCCP) and then the CO(2) group is transferred by the transcarboxylase to acetyl-CoA to form malonyl-CoA. This chain is Acetyl-coenzyme A carboxylase carboxyl transferase subunit beta, found in Brucella ovis (strain ATCC 25840 / 63/290 / NCTC 10512).